The primary structure comprises 603 residues: Sulfite reductase [NADPH] flavoprotein alpha-component (603 aa).

One can recognise a Flavodoxin-like domain in the interval 64–202 (ITLISASQTG…QAETWRAAIV (139 aa)). FMN is bound by residues 70 to 75 (SQTGNA), 117 to 120 (STQG), and 153 to 162 (LGDSSYEHFA). The 217-residue stretch at 236–452 (EAPLTAHLAL…IEHNDNFRLP (217 aa)) folds into the FAD-binding FR-type domain. FAD contacts are provided by residues Thr-326, Leu-360, 390-393 (RLYS), 408-410 (TVG), Tyr-414, and 423-426 (GGAS). NADP(+) contacts are provided by residues 523–524 (SR), 529–533 (KIYVQ), and Asp-565. An FAD-binding site is contributed by Tyr-603.

The protein belongs to the NADPH-dependent sulphite reductase flavoprotein subunit CysJ family. This sequence in the N-terminal section; belongs to the flavodoxin family. In the C-terminal section; belongs to the flavoprotein pyridine nucleotide cytochrome reductase family. In terms of assembly, alpha(8)-beta(8). The alpha component is a flavoprotein, the beta component is a hemoprotein. It depends on FAD as a cofactor. Requires FMN as cofactor.

It catalyses the reaction hydrogen sulfide + 3 NADP(+) + 3 H2O = sulfite + 3 NADPH + 4 H(+). It participates in sulfur metabolism; hydrogen sulfide biosynthesis; hydrogen sulfide from sulfite (NADPH route): step 1/1. Functionally, component of the sulfite reductase complex that catalyzes the 6-electron reduction of sulfite to sulfide. This is one of several activities required for the biosynthesis of L-cysteine from sulfate. The flavoprotein component catalyzes the electron flow from NADPH -&gt; FAD -&gt; FMN to the hemoprotein component. This is Sulfite reductase [NADPH] flavoprotein alpha-component from Sodalis glossinidius (strain morsitans).